The following is a 105-amino-acid chain: Guanyl-specific ribonuclease U1 (105 aa).

Pyrrolidone carboxylic acid is present on Gln1. 2 disulfide bridges follow: Cys8/Cys103 and Cys51/Cys87. Residue His37 is part of the active site. Glu57 functions as the Proton acceptor in the catalytic mechanism. The Proton donor role is filled by His92.

It belongs to the ribonuclease N1/T1 family.

The catalysed reaction is [RNA] containing guanosine + H2O = an [RNA fragment]-3'-guanosine-3'-phosphate + a 5'-hydroxy-ribonucleotide-3'-[RNA fragment].. The polypeptide is Guanyl-specific ribonuclease U1 (Ustilago sphaerogena (Smut fungus)).